The sequence spans 53 residues: Conotoxin Cal6.23 (53 aa).

An N-terminal signal peptide occupies residues 1–22; sequence MKLTAVLMVAVLVLTACQLITA. Disulfide bonds link C25-C40, C32-C47, and C39-C51.

This sequence belongs to the conotoxin O1 superfamily. Expressed by the venom duct.

It localises to the secreted. Probable neurotoxin. The chain is Conotoxin Cal6.23 from Californiconus californicus (California cone).